Reading from the N-terminus, the 152-residue chain is Large ribosomal subunit protein uL15 (152 aa).

Residues 31–58 (GASCGFGMRGQKSRSGRPTRPGFEGGQM) form a disordered region.

It belongs to the universal ribosomal protein uL15 family. Part of the 50S ribosomal subunit.

Functionally, binds to the 23S rRNA. This chain is Large ribosomal subunit protein uL15, found in Parasynechococcus marenigrum (strain WH8102).